A 159-amino-acid polypeptide reads, in one-letter code: Transcription antitermination protein NusB (159 aa).

This sequence belongs to the NusB family.

Its function is as follows. Involved in transcription antitermination. Required for transcription of ribosomal RNA (rRNA) genes. Binds specifically to the boxA antiterminator sequence of the ribosomal RNA (rrn) operons. The chain is Transcription antitermination protein NusB from Xanthomonas axonopodis pv. citri (strain 306).